Consider the following 222-residue polypeptide: Leucyl/phenylalanyl-tRNA--protein transferase (222 aa).

This sequence belongs to the L/F-transferase family.

Its subcellular location is the cytoplasm. The enzyme catalyses N-terminal L-lysyl-[protein] + L-leucyl-tRNA(Leu) = N-terminal L-leucyl-L-lysyl-[protein] + tRNA(Leu) + H(+). It carries out the reaction N-terminal L-arginyl-[protein] + L-leucyl-tRNA(Leu) = N-terminal L-leucyl-L-arginyl-[protein] + tRNA(Leu) + H(+). It catalyses the reaction L-phenylalanyl-tRNA(Phe) + an N-terminal L-alpha-aminoacyl-[protein] = an N-terminal L-phenylalanyl-L-alpha-aminoacyl-[protein] + tRNA(Phe). Functionally, functions in the N-end rule pathway of protein degradation where it conjugates Leu, Phe and, less efficiently, Met from aminoacyl-tRNAs to the N-termini of proteins containing an N-terminal arginine or lysine. This chain is Leucyl/phenylalanyl-tRNA--protein transferase, found in Legionella pneumophila (strain Paris).